Here is a 353-residue protein sequence, read N- to C-terminus: Spermidine/putrescine import ATP-binding protein PotA (353 aa).

In terms of domain architecture, ABC transporter spans 7-237 (IRFERVTKEY…PINRFVADFI (231 aa)). 39–46 (GPSGCGKT) contributes to the ATP binding site.

It belongs to the ABC transporter superfamily. Spermidine/putrescine importer (TC 3.A.1.11.1) family. The complex is composed of two ATP-binding proteins (PotA), two transmembrane proteins (PotB and PotC) and a solute-binding protein (PotD).

The protein resides in the cell membrane. The enzyme catalyses ATP + H2O + polyamine-[polyamine-binding protein]Side 1 = ADP + phosphate + polyamineSide 2 + [polyamine-binding protein]Side 1.. In terms of biological role, part of the ABC transporter complex PotABCD involved in spermidine/putrescine import. Responsible for energy coupling to the transport system. This is Spermidine/putrescine import ATP-binding protein PotA from Geobacillus kaustophilus (strain HTA426).